A 417-amino-acid chain; its full sequence is Xylulose 5-phosphate/phosphate translocator, chloroplastic (417 aa).

A chloroplast-targeting transit peptide spans 1-82 (MISLNLSPSL…GFSRKPRSIA (82 aa)). The disordered stretch occupies residues 66-102 (TNPESSSGFSRKPRSIAAVGSSDSNPDEKSDLGEAEK). Residue A83 is modified to N-acetylalanine. Basic and acidic residues predominate over residues 91–102 (PDEKSDLGEAEK). The next 9 membrane-spanning stretches (helical) occupy residues 109–129 (TLQL…FNIF), 141–161 (WLLA…LWSF), 173–193 (FIIA…SACV), 198–218 (VAVS…VIFS), 225–245 (YPLA…LAAV), 247–267 (EVSF…GFVL), 287–307 (LYGC…IFVE), 318–338 (AIAS…SGVF), and 384–404 (LNAL…QATA). The 117-residue stretch at 127–243 (NIFNKKALNV…LPIVMGCSLA (117 aa)) folds into the EamA domain.

Belongs to the TPT transporter family. TPT (TC 2.A.7.9) subfamily. As to expression, widely expressed.

It is found in the plastid. Its subcellular location is the chloroplast membrane. Its function is as follows. Sugar phosphate/phosphate translocator that transports inorganic phosphate, triose phosphate, 3-phosphoglycerate, xylulose 5-phosphate (Xul-5-P) and to a lesser extent ribulose 5-phosphate. Does not transport ribose 5-phosphate or hexose phosphates. Provides cytosolic Xul-5-P to the chloroplast, where it is used as an intermediate in the plastidic pentose phosphate pathways. The polypeptide is Xylulose 5-phosphate/phosphate translocator, chloroplastic (XPT) (Arabidopsis thaliana (Mouse-ear cress)).